Reading from the N-terminus, the 310-residue chain is Ribosomal RNA small subunit methyltransferase H (310 aa).

S-adenosyl-L-methionine-binding positions include 40-42, Asp-59, Phe-89, Asp-104, and Gln-111; that span reads GGH.

This sequence belongs to the methyltransferase superfamily. RsmH family.

Its subcellular location is the cytoplasm. The catalysed reaction is cytidine(1402) in 16S rRNA + S-adenosyl-L-methionine = N(4)-methylcytidine(1402) in 16S rRNA + S-adenosyl-L-homocysteine + H(+). Specifically methylates the N4 position of cytidine in position 1402 (C1402) of 16S rRNA. This chain is Ribosomal RNA small subunit methyltransferase H, found in Amoebophilus asiaticus (strain 5a2).